A 687-amino-acid polypeptide reads, in one-letter code: Solute carrier organic anion transporter family member 1B2 (687 aa).

At 1 to 28 (MDHTQQSRKAAEAQPSRSKQTRFCDGFK) the chain is on the cytoplasmic side. Residues 29 to 48 (LFLAALSFSYICKALGGVVM) traverse the membrane as a helical segment. Residues 49 to 67 (KSSITQIERRFDIPSSISG) lie on the Extracellular side of the membrane. The chain crosses the membrane as a helical span at residues 68–88 (LIDGGFEIGNLLVIVFVSYFG). The Cytoplasmic portion of the chain corresponds to 89-94 (SKLHRP). A helical membrane pass occupies residues 95–119 (KLIGIGCFIMGIGSILTALPHFFMG). Topologically, residues 120–165 (YYKYAKENDIGSLGNSTLTCFINQMTSPTGPSPEIVEKGCEKGLKS) are extracellular. A glycan (N-linked (GlcNAc...) asparagine) is linked at asparagine 134. The helical transmembrane segment at 166-194 (HMWIYVLMGNMLRGIGETPIVPLGISYLD) threads the bilayer. The Cytoplasmic segment spans residues 195 to 213 (DFAKEGHTSMHLGTLHTIA). Residues 214 to 234 (MIGPILGFIMSSVFAKIYVDV) form a helical membrane-spanning segment. Residues 235 to 252 (GYVDLNSVRITPNDARWV) lie on the Extracellular side of the membrane. The chain crosses the membrane as a helical span at residues 253-277 (GAWWLSFIVNGLLCITSSIPFFFLP). Topologically, residues 278 to 328 (KIPKRSQEERKNSVSLHAPKTDEEKKHMTNLTKQEEQDPSNMTGFLRSLRS) are cytoplasmic. The tract at residues 286 to 311 (ERKNSVSLHAPKTDEEKKHMTNLTKQ) is disordered. Phosphoserine occurs at positions 290 and 292. A helical transmembrane segment spans residues 329–350 (ILTNEIYVIFLILTLLQVSGFI). Residues 351 to 370 (GSFTYLFKFIEQQFGRTASQ) lie on the Extracellular side of the membrane. A helical membrane pass occupies residues 371–394 (ANFLLGIITIPTMATAMFLGGYIV). Topologically, residues 395–398 (KKFK) are cytoplasmic. The chain crosses the membrane as a helical span at residues 399 to 422 (LTSVGIAKFVFFTSSVAYAFQFLY). The Extracellular segment spans residues 423-531 (FPLLCENKPF…YKCKTNYYFY (109 aa)). A Kazal-like domain is found at 450-507 (DVPLSYCNSDCSCDKNQWEPICGENGVTYISPCLAGCKSFRGDKKPNNTEFYDCSCIS). Cystine bridges form between cysteine 456–cysteine 486, cysteine 462–cysteine 482, and cysteine 471–cysteine 505. N-linked (GlcNAc...) asparagine glycosylation is found at asparagine 496 and asparagine 511. Residues 532 to 554 (IILQVTVSFFTAMGSPSLILILM) traverse the membrane as a helical segment. Over 555–563 (KSVQPELKS) the chain is Cytoplasmic. The helical transmembrane segment at 564–589 (LAMGFHSLIIRALGGILAPIYYGAFI) threads the bilayer. The Extracellular portion of the chain corresponds to 590-623 (DRTCIKWSVTSCGKRGACRLYNSRLFGFSYLGLN). Residues 624 to 641 (LALKTPPLFLYVVLIYFT) traverse the membrane as a helical segment. Over 642 to 687 (KRKYKRNDNKTLENGRQFTDEGNPDSVNKNGYYCVPYDEQSNETPL) the chain is Cytoplasmic. The residue at position 660 (threonine 660) is a Phosphothreonine. A Phosphoserine modification is found at serine 667.

Belongs to the organo anion transporter (TC 2.A.60) family. As to expression, liver specific. Expression is highest in central perivenous hepatocytes and lowest in the periportal region. Isoform 1 predominates. Not detected in heart, brain, kidney, skeletal muscle, lung, testis or spleen.

Its subcellular location is the basolateral cell membrane. The enzyme catalyses estrone 3-sulfate(out) = estrone 3-sulfate(in). It catalyses the reaction taurocholate(out) = taurocholate(in). It carries out the reaction prostaglandin E2(out) = prostaglandin E2(in). The catalysed reaction is L-thyroxine(out) = L-thyroxine(in). Its function is as follows. Mediates the Na(+)-independent uptake of organic anions such as taurochlate, bromosulfophthalein and steroid conjugates (estrone 3-sulfate, 17-beta-glucuronosyl estradiol, dehydroepiandrosterone sulfate). Also transports prostaglandin E2 and L-thyroxine (T4). Shows a pH-sensitive substrate specificity which may be ascribed to the protonation state of the binding site and leads to a stimulation of substrate transport in an acidic microenvironment. Hydrogencarbonate/HCO3(-) acts as the probable counteranion that exchanges for organic anions. This Rattus norvegicus (Rat) protein is Solute carrier organic anion transporter family member 1B2 (Slco1b2).